The primary structure comprises 296 residues: Putative peptide transport system permease protein BruAb2_1032 (296 aa).

6 helical membrane passes run 35–55 (IGLVLLLIVVLAAVLAPWITN), 97–117 (LWIGLTVAVLSAILGAIIGIA), 131–151 (VMDALMAFPAILLAIGISAAL), 205–225 (ILPNCLAPLLVTLTFVFAYAI), 229–249 (ATLSFLGIGTPPPHASWGSIV), and 260–280 (WWIMLFPGIAITISALAINLI). The ABC transmembrane type-1 domain occupies 97–281 (LWIGLTVAVL…ISALAINLIG (185 aa)).

Belongs to the binding-protein-dependent transport system permease family. The complex is composed of two ATP-binding proteins (BruAb2_1033 and BruAb2_1034), two transmembrane proteins (BruAb2_1031 and BruAb2_1032) and a solute-binding protein (BruAb2_1030).

Its subcellular location is the cell inner membrane. Its function is as follows. Probably part of an ABC transporter complex that could be involved in peptide import. Probably responsible for the translocation of the substrate across the membrane. In Brucella abortus biovar 1 (strain 9-941), this protein is Putative peptide transport system permease protein BruAb2_1032.